The primary structure comprises 506 residues: Maturase K (506 aa).

It belongs to the intron maturase 2 family. MatK subfamily.

The protein resides in the plastid. The protein localises to the chloroplast. Usually encoded in the trnK tRNA gene intron. Probably assists in splicing its own and other chloroplast group II introns. The sequence is that of Maturase K from Erica tetralix (Cross-leaved heath).